A 349-amino-acid polypeptide reads, in one-letter code: S-adenosylmethionine:tRNA ribosyltransferase-isomerase (349 aa).

The protein belongs to the QueA family. In terms of assembly, monomer.

The protein localises to the cytoplasm. It carries out the reaction 7-aminomethyl-7-carbaguanosine(34) in tRNA + S-adenosyl-L-methionine = epoxyqueuosine(34) in tRNA + adenine + L-methionine + 2 H(+). It participates in tRNA modification; tRNA-queuosine biosynthesis. Its function is as follows. Transfers and isomerizes the ribose moiety from AdoMet to the 7-aminomethyl group of 7-deazaguanine (preQ1-tRNA) to give epoxyqueuosine (oQ-tRNA). In Pseudomonas putida (strain ATCC 700007 / DSM 6899 / JCM 31910 / BCRC 17059 / LMG 24140 / F1), this protein is S-adenosylmethionine:tRNA ribosyltransferase-isomerase.